An 830-amino-acid polypeptide reads, in one-letter code: Vacuolar protein sorting-associated protein 11 homolog (830 aa).

The RING-type; atypical zinc finger occupies 733 to 775 (CDICREMLSMQSIYFLCQHSFHEECLNYKSTKRQEKFLCIICK).

This sequence belongs to the VPS11 family. As to quaternary structure, part of the homotypic fusion and vacuole protein sorting (HOPS) complex, composed of Vps16A, car/Vps33A, dor/Vps18, Vps39, Vps11 and lt/Vps41. Unlike in other species, not part of the class C core vacuole/endosome tethering (CORVET) complex.

It localises to the late endosome membrane. It is found in the lysosome membrane. Its function is as follows. Part of the homotypic fusion and vacuole protein sorting (HOPS) tethering complex involved in endo-lysosomal vesicle trafficking and lysosome biogenesis, but unlike in many other species does not form part of the class C core vacuole/endosome tethering (CORVET) complex. The HOPS complex facilitates docking and fusion of lysosomes with late endosomes and several other types of vesicles. The HOPS complex is also involved in autophagy, pigment granule biogenesis and crinophagy (the elimination of unused secretory granules through fusion with lysosomes). The HOPS complex probably instigates autophagosome-lysosome fusion by binding autophagosome-associated Syx17/syntaxin 17 and promoting assembly of the trans-SNARE complex. Independent of Syx17/syntaxin 17, HOPS is involved in biosynthetic transport to lysosomes and lysosome-related organelles such as eye-pigment granules. Required for autophagocytosis-dependent remodeling of myofibrils and transverse-tubules (T-tubules) during metamorphosis. The sequence is that of Vacuolar protein sorting-associated protein 11 homolog from Drosophila melanogaster (Fruit fly).